Consider the following 465-residue polypeptide: GTPase Der (465 aa).

2 EngA-type G domains span residues 3 to 167 and 179 to 352; these read PLVA…PERS and IHIA…VSAL. Residues 9 to 16, 57 to 61, 119 to 122, 185 to 192, 232 to 236, and 297 to 300 each bind GTP; these read GRPNVGKS, DTGGM, NKID, DTAGL, and NKWD. A KH-like domain is found at 353-437; the sequence is RQFSTSEVNK…PVRFLFREGD (85 aa).

This sequence belongs to the TRAFAC class TrmE-Era-EngA-EngB-Septin-like GTPase superfamily. EngA (Der) GTPase family. Associates with the 50S ribosomal subunit.

GTPase that plays an essential role in the late steps of ribosome biogenesis. In Xylella fastidiosa (strain M12), this protein is GTPase Der.